The primary structure comprises 37 residues: Large ribosomal subunit protein bL36 (37 aa).

It belongs to the bacterial ribosomal protein bL36 family.

This is Large ribosomal subunit protein bL36 from Nostoc sp. (strain PCC 7120 / SAG 25.82 / UTEX 2576).